We begin with the raw amino-acid sequence, 189 residues long: Probable RNA 2'-phosphotransferase (189 aa).

It belongs to the KptA/TPT1 family.

Functionally, removes the 2'-phosphate from RNA via an intermediate in which the phosphate is ADP-ribosylated by NAD followed by a presumed transesterification to release the RNA and generate ADP-ribose 1''-2''-cyclic phosphate (APPR&gt;P). May function as an ADP-ribosylase. The chain is Probable RNA 2'-phosphotransferase from Streptomyces griseus subsp. griseus (strain JCM 4626 / CBS 651.72 / NBRC 13350 / KCC S-0626 / ISP 5235).